Consider the following 636-residue polypeptide: Protein BCAP (636 aa).

5 coiled-coil regions span residues 36–97 (LSCL…EQKE), 141–220 (ESEN…WNLQ), 249–325 (YKQR…HGKN), 377–484 (ISSE…ECQE), and 519–631 (LEEE…KMNS).

This sequence belongs to the ODF2 family. In terms of tissue distribution, mainly expressed in trachea and testis. Not detected in bone marrow, bladder, leukocytes. Only weakly detected in tongue, stomach, brain and ovaries.

The protein localises to the cytoplasm. Its subcellular location is the cytoskeleton. It is found in the microtubule organizing center. It localises to the centrosome. The protein resides in the centriole. The protein localises to the centriolar satellite. Its subcellular location is the cilium basal body. Acts as a suppressor of ciliogenesis, specifically, the initiation of ciliogenesis. In Homo sapiens (Human), this protein is Protein BCAP.